The chain runs to 124 residues: Small ribosomal subunit protein uS12 (124 aa).

3-methylthioaspartic acid is present on aspartate 89. The segment at 104–124 (TAGVKDRRQSRSKYGAKTPKE) is disordered.

This sequence belongs to the universal ribosomal protein uS12 family. In terms of assembly, part of the 30S ribosomal subunit. Contacts proteins S8 and S17. May interact with IF1 in the 30S initiation complex.

Functionally, with S4 and S5 plays an important role in translational accuracy. Interacts with and stabilizes bases of the 16S rRNA that are involved in tRNA selection in the A site and with the mRNA backbone. Located at the interface of the 30S and 50S subunits, it traverses the body of the 30S subunit contacting proteins on the other side and probably holding the rRNA structure together. The combined cluster of proteins S8, S12 and S17 appears to hold together the shoulder and platform of the 30S subunit. The protein is Small ribosomal subunit protein uS12 of Parasynechococcus marenigrum (strain WH8102).